A 941-amino-acid chain; its full sequence is Cell wall protein IFF3 (941 aa).

A signal peptide spans 1–20; the sequence is MQLFQNILVSIALLTQVVFA. 9 N-linked (GlcNAc...) asparagine glycosylation sites follow: N36, N367, N686, N732, N790, N818, N825, N884, and N917. N917 is lipidated: GPI-anchor amidated asparagine. A propeptide spans 918–941 (removed in mature form); the sequence is GSNKESIENIKYLTLVVFGLMMFM.

Belongs to the HYR1/IFF family. In terms of processing, the GPI-anchor is attached to the protein in the endoplasmic reticulum and serves to target the protein to the cell surface. There, the glucosamine-inositol phospholipid moiety is cleaved off and the GPI-modified mannoprotein is covalently attached via its lipidless GPI glycan remnant to the 1,6-beta-glucan of the outer cell wall layer.

The protein localises to the secreted. It is found in the cell wall. The protein resides in the membrane. Its function is as follows. GPI-anchored cell wall protein involved in cell wall organization, hyphal growth, as well as in host-fungal interaction and virulence. This chain is Cell wall protein IFF3 (IFF3), found in Candida albicans (strain SC5314 / ATCC MYA-2876) (Yeast).